A 416-amino-acid polypeptide reads, in one-letter code: Putative competence-damage inducible protein (416 aa).

The protein belongs to the CinA family.

This chain is Putative competence-damage inducible protein, found in Bacillus velezensis (strain DSM 23117 / BGSC 10A6 / LMG 26770 / FZB42) (Bacillus amyloliquefaciens subsp. plantarum).